Here is a 65-residue protein sequence, read N- to C-terminus: MKCIQIEMSFTDEYGQVTRLNKTYKPSIIEEHKGEIPRLLLDDFKRFLSSLGFNEKQVSRIVTED.

In Bacillus subtilis (strain 168), this protein is SPbeta prophage-derived uncharacterized protein YorO (yorO).